The following is a 328-amino-acid chain: Tetraacyldisaccharide 4'-kinase (328 aa).

55-62 lines the ATP pocket; that stretch reads TAGGNGKT.

The protein belongs to the LpxK family.

It catalyses the reaction a lipid A disaccharide + ATP = a lipid IVA + ADP + H(+). The protein operates within glycolipid biosynthesis; lipid IV(A) biosynthesis; lipid IV(A) from (3R)-3-hydroxytetradecanoyl-[acyl-carrier-protein] and UDP-N-acetyl-alpha-D-glucosamine: step 6/6. Its function is as follows. Transfers the gamma-phosphate of ATP to the 4'-position of a tetraacyldisaccharide 1-phosphate intermediate (termed DS-1-P) to form tetraacyldisaccharide 1,4'-bis-phosphate (lipid IVA). The sequence is that of Tetraacyldisaccharide 4'-kinase from Escherichia coli (strain SMS-3-5 / SECEC).